An 857-amino-acid polypeptide reads, in one-letter code: Protein STICHEL-like 2 (857 aa).

280–287 (GPRGTGKT) provides a ligand contact to ATP. C299, C309, C312, and C315 together coordinate Zn(2+). Residues 544–576 (LTRHTSEEEMQKLRNALKILSDAEKHLRASKNQ) adopt a coiled-coil conformation. 2 disordered regions span residues 593-629 (SSFA…DAEK) and 787-845 (ASSR…SSRL). Residues 599–610 (ENGRNQINKDVE) are compositionally biased toward basic and acidic residues. Over residues 834-843 (QSETQNSKSS) the composition is skewed to polar residues.

It belongs to the DnaX/STICHEL family.

The sequence is that of Protein STICHEL-like 2 from Arabidopsis thaliana (Mouse-ear cress).